The sequence spans 224 residues: 7-cyano-7-deazaguanine synthase (224 aa).

ATP is bound at residue 10–20; sequence VSGGLDSATVL. The Zn(2+) site is built by Cys189, Cys199, Cys202, and Cys205.

The protein belongs to the QueC family. Zn(2+) is required as a cofactor.

It carries out the reaction 7-carboxy-7-deazaguanine + NH4(+) + ATP = 7-cyano-7-deazaguanine + ADP + phosphate + H2O + H(+). Its pathway is purine metabolism; 7-cyano-7-deazaguanine biosynthesis. In terms of biological role, catalyzes the ATP-dependent conversion of 7-carboxy-7-deazaguanine (CDG) to 7-cyano-7-deazaguanine (preQ(0)). In Nitrosococcus oceani (strain ATCC 19707 / BCRC 17464 / JCM 30415 / NCIMB 11848 / C-107), this protein is 7-cyano-7-deazaguanine synthase.